Reading from the N-terminus, the 184-residue chain is Peptide deformylase (184 aa).

Fe cation-binding residues include cysteine 92 and histidine 134. The active site involves glutamate 135. Histidine 138 is a Fe cation binding site.

The protein belongs to the polypeptide deformylase family. Fe(2+) serves as cofactor.

The enzyme catalyses N-terminal N-formyl-L-methionyl-[peptide] + H2O = N-terminal L-methionyl-[peptide] + formate. Functionally, removes the formyl group from the N-terminal Met of newly synthesized proteins. Requires at least a dipeptide for an efficient rate of reaction. N-terminal L-methionine is a prerequisite for activity but the enzyme has broad specificity at other positions. The protein is Peptide deformylase of Psychrobacter arcticus (strain DSM 17307 / VKM B-2377 / 273-4).